The following is a 247-amino-acid chain: tRNA pseudouridine synthase A (247 aa).

Aspartate 57 acts as the Nucleophile in catalysis. Tyrosine 115 provides a ligand contact to substrate.

It belongs to the tRNA pseudouridine synthase TruA family. Homodimer.

It carries out the reaction uridine(38/39/40) in tRNA = pseudouridine(38/39/40) in tRNA. Its function is as follows. Formation of pseudouridine at positions 38, 39 and 40 in the anticodon stem and loop of transfer RNAs. The protein is tRNA pseudouridine synthase A of Chlorobaculum tepidum (strain ATCC 49652 / DSM 12025 / NBRC 103806 / TLS) (Chlorobium tepidum).